A 530-amino-acid chain; its full sequence is uncharacterized protein (530 aa).

It belongs to the mimivirus R640 family.

This is an uncharacterized protein from Acanthamoeba polyphaga (Amoeba).